The sequence spans 88 residues: MANHKSALKRAKQNTIKQMRNRSYKTRLRNMVKKVNQAVEAQSVDEAKTILVETQSIIDKCASKGVIHKNTASRKISRLAKKVEALAG.

Residues 1–12 (MANHKSALKRAK) are compositionally biased toward basic residues. A disordered region spans residues 1–23 (MANHKSALKRAKQNTIKQMRNRS).

This sequence belongs to the bacterial ribosomal protein bS20 family.

Functionally, binds directly to 16S ribosomal RNA. The polypeptide is Small ribosomal subunit protein bS20 (Desulfatibacillum aliphaticivorans).